Consider the following 545-residue polypeptide: CTP synthase (545 aa).

The tract at residues Met1 to Leu265 is amidoligase domain. A CTP-binding site is contributed by Ser15. Ser15 is a UTP binding site. ATP-binding positions include Ser16–Leu21 and Asp73. Asp73 and Glu141 together coordinate Mg(2+). CTP-binding positions include Asp148 to Glu150, Lys188 to Gln193, and Lys224. UTP is bound by residues Lys188 to Gln193 and Lys224. The Glutamine amidotransferase type-1 domain maps to Glu290–Ile534. Position 349 (Gly349) interacts with L-glutamine. Cys376 acts as the Nucleophile; for glutamine hydrolysis in catalysis. L-glutamine-binding positions include Leu377–Gln380, Glu400, and Arg460. Catalysis depends on residues His507 and Glu509.

The protein belongs to the CTP synthase family. In terms of assembly, homotetramer.

It catalyses the reaction UTP + L-glutamine + ATP + H2O = CTP + L-glutamate + ADP + phosphate + 2 H(+). The catalysed reaction is L-glutamine + H2O = L-glutamate + NH4(+). It carries out the reaction UTP + NH4(+) + ATP = CTP + ADP + phosphate + 2 H(+). Its pathway is pyrimidine metabolism; CTP biosynthesis via de novo pathway; CTP from UDP: step 2/2. With respect to regulation, allosterically activated by GTP, when glutamine is the substrate; GTP has no effect on the reaction when ammonia is the substrate. The allosteric effector GTP functions by stabilizing the protein conformation that binds the tetrahedral intermediate(s) formed during glutamine hydrolysis. Inhibited by the product CTP, via allosteric rather than competitive inhibition. Its function is as follows. Catalyzes the ATP-dependent amination of UTP to CTP with either L-glutamine or ammonia as the source of nitrogen. Regulates intracellular CTP levels through interactions with the four ribonucleotide triphosphates. The chain is CTP synthase from Tropheryma whipplei (strain TW08/27) (Whipple's bacillus).